Reading from the N-terminus, the 172-residue chain is 3-phenylpropionate/cinnamic acid dioxygenase subunit beta (172 aa).

The protein belongs to the bacterial ring-hydroxylating dioxygenase beta subunit family. This dioxygenase system consists of four proteins: the two subunits of the hydroxylase component (HcaE and HcaF), a ferredoxin (HcaC) and a ferredoxin reductase (HcaD).

The enzyme catalyses 3-phenylpropanoate + NADH + O2 + H(+) = 3-(cis-5,6-dihydroxycyclohexa-1,3-dien-1-yl)propanoate + NAD(+). It carries out the reaction (E)-cinnamate + NADH + O2 + H(+) = (2E)-3-(cis-5,6-dihydroxycyclohexa-1,3-dien-1-yl)prop-2-enoate + NAD(+). It participates in aromatic compound metabolism; 3-phenylpropanoate degradation. In terms of biological role, part of the multicomponent 3-phenylpropionate dioxygenase. Converts 3-phenylpropionic acid (PP) and cinnamic acid (CI) into 3-phenylpropionate-dihydrodiol (PP-dihydrodiol) and cinnamic acid-dihydrodiol (CI-dihydrodiol), respectively. The protein is 3-phenylpropionate/cinnamic acid dioxygenase subunit beta of Shigella boydii serotype 4 (strain Sb227).